The sequence spans 337 residues: DnaJ homolog dnj-2 (337 aa).

The helical transmembrane segment at 4–24 (AIAAPILFLLVSFFVQECESV) threads the bilayer. The J domain occupies 36–105 (NCYDVLEVNR…EAKTNYDYYL (70 aa)). Transmembrane regions (helical) follow at residues 127 to 147 (VDLR…QFLS) and 222 to 242 (LAWH…WTAL). Residues 293 to 323 (LKRNCATWKAERDAAEQEKMAQSGRYKRYKR) are a coiled coil.

This sequence belongs to the DNAJC25 family.

The protein resides in the membrane. This is DnaJ homolog dnj-2 (dnj-2) from Caenorhabditis elegans.